Reading from the N-terminus, the 46-residue chain is Lantibiotic streptin (46 aa).

The propeptide occupies 1-24 (MNNTIKDFDLDLKTNKKDTATPYV).

It belongs to the type A lantibiotic family. Post-translationally, maturation of lantibiotics involves the enzymatic conversion of Thr, and Ser into dehydrated AA and the formation of thioether bonds with cysteine. This is followed by membrane translocation and cleavage of the modified precursor.

Functionally, lanthionine-containing peptide antibiotic (lantibiotic) active on certain Gram-positive bacteria. The bactericidal activity of lantibiotics is based on depolarization of energized bacterial cytoplasmic membranes, initiated by the formation of aqueous transmembrane pores. The sequence is that of Lantibiotic streptin (srtA) from Streptococcus pyogenes serotype M1.